A 642-amino-acid chain; its full sequence is ATP-dependent rRNA helicase spb4 (642 aa).

The Q motif motif lies at 14 to 42 (WDGVTPALSEWVLDAVASMGFTRMTPVQA). In terms of domain architecture, Helicase ATP-binding spans 45–250 (IPLFMAHKDV…RVGLRNPVKV (206 aa)). Position 58 to 65 (58 to 65 (AVTGSGKT)) interacts with ATP. Positions 198–201 (DEAD) match the DEAD box motif. A Helicase C-terminal domain is found at 284-438 (AIKHILYSLE…TLTITDADAA (155 aa)). A coiled-coil region spans residues 522–625 (AYKDKQREKR…RLLRRAAKDK (104 aa)). Composition is skewed to basic and acidic residues over residues 527-536 (QREKRRKEQV) and 577-628 (AKQA…KESK). Positions 527-642 (QREKRRKEQV…DDDDEFKGFD (116 aa)) are disordered. The span at 632-642 (GDDDDEFKGFD) shows a compositional bias: acidic residues.

The protein belongs to the DEAD box helicase family. DDX55/SPB4 subfamily. Component of pre-60S ribosomal complexes.

It is found in the nucleus. The protein resides in the nucleolus. The catalysed reaction is ATP + H2O = ADP + phosphate + H(+). ATP-binding RNA helicase involved in the biogenesis of 60S ribosomal subunits. Binds 90S pre-ribosomal particles and dissociates from pre-60S ribosomal particles after processing of 27SB pre-rRNA. Required for the normal formation of 18S rRNA through the processing of pre-rRNAs at sites A0, A1 and A2, and the normal formation of 25S and 5.8S rRNAs through the processing of pre-rRNAs at sites C1 and C2. The protein is ATP-dependent rRNA helicase spb4 of Aspergillus niger (strain ATCC MYA-4892 / CBS 513.88 / FGSC A1513).